The sequence spans 342 residues: Phosphatidate cytidylyltransferase, mitochondrial (342 aa).

It belongs to the TAM41 family. Mg(2+) is required as a cofactor. The cofactor is Co(2+). Cu(2+) serves as cofactor.

Its subcellular location is the mitochondrion inner membrane. The catalysed reaction is a 1,2-diacyl-sn-glycero-3-phosphate + CTP + H(+) = a CDP-1,2-diacyl-sn-glycerol + diphosphate. It functions in the pathway phospholipid metabolism; CDP-diacylglycerol biosynthesis; CDP-diacylglycerol from sn-glycerol 3-phosphate: step 3/3. In terms of biological role, catalyzes the formation of CDP-diacylglycerol (CDP-DAG) from phosphatidic acid (PA) in the mitochondrial inner membrane. Required for the biosynthesis of the dimeric phospholipid cardiolipin, which stabilizes supercomplexes of the mitochondrial respiratory chain in the mitochondrial inner membrane. The sequence is that of Phosphatidate cytidylyltransferase, mitochondrial from Drosophila melanogaster (Fruit fly).